We begin with the raw amino-acid sequence, 1209 residues long: Protein phosphatase 1 regulatory subunit 26 (1209 aa).

Disordered regions lie at residues 57-91 (DGAA…TVHK), 145-279 (SGAA…HRQG), 291-471 (KPPR…VERS), 501-532 (GSDG…DSDD), 555-694 (GESC…EDLD), 733-836 (EQLG…SNDS), 848-1033 (KAKE…FAHQ), 1052-1072 (RGGV…GLPS), and 1118-1209 (AFRE…VVKV). Positions 63-91 (TSDERAAQRGHRAEGCHDARPAAKPTVHK) are enriched in basic and acidic residues. The segment covering 201 to 219 (QVGSSKDQGSASPVSVSSD) has biased composition (low complexity). A compositionally biased stretch (basic and acidic residues) spans 226 to 255 (IRAEIEQFLNEKRQHETQKCDGSVEKKPDT). The span at 301 to 321 (QPRSLRSKVTTTQENEGSTKP) shows a compositional bias: polar residues. Over residues 352 to 362 (SAAQASEASDS) the composition is skewed to low complexity. Over residues 442-454 (DTDHAPKLLKETK) the composition is skewed to basic and acidic residues. 3 stretches are compositionally biased toward basic and acidic residues: residues 609–637 (KMQE…RRDL), 667–685 (KTDE…DKSS), and 757–766 (SKRDSGEGPG). Low complexity-rich tracts occupy residues 821–836 (PGSL…SNDS) and 852–861 (SVSSSEVQAE). A Phosphoserine modification is found at Ser1161. Low complexity predominate over residues 1187 to 1209 (GSDASDFSDTSTEDSGGSSVVKV).

Interacts with UTP20 and PPP1CA. In terms of tissue distribution, ubiquitous in normal tissues. Expressed in numerous adenocarcinoma cell lines.

It localises to the nucleus. It is found in the nucleolus. Functionally, inhibits phosphatase activity of protein phosphatase 1 (PP1) complexes. May positively regulate cell proliferation. This Homo sapiens (Human) protein is Protein phosphatase 1 regulatory subunit 26 (PPP1R26).